Consider the following 203-residue polypeptide: Serine hydrolase-like protein (203 aa).

One can recognise an AB hydrolase-1 domain in the interval 33-145; it reads PPVLCLHGWL…FLLESDEMEN (113 aa). S108 is a catalytic residue.

This sequence belongs to the AB hydrolase superfamily.

Its function is as follows. Putative serine hydrolase. In Homo sapiens (Human), this protein is Serine hydrolase-like protein (SERHL).